Reading from the N-terminus, the 156-residue chain is Large ribosomal subunit protein uL22 (156 aa).

This sequence belongs to the universal ribosomal protein uL22 family. In terms of assembly, part of the 50S ribosomal subunit.

Its function is as follows. This protein binds specifically to 23S rRNA. It makes multiple contacts with different domains of the 23S rRNA in the assembled 50S subunit and ribosome. In terms of biological role, the globular domain of the protein is located near the polypeptide exit tunnel on the outside of the subunit, while an extended beta-hairpin is found that lines the wall of the exit tunnel in the center of the 70S ribosome. The sequence is that of Large ribosomal subunit protein uL22 from Aeropyrum pernix (strain ATCC 700893 / DSM 11879 / JCM 9820 / NBRC 100138 / K1).